The chain runs to 331 residues: Nacrein-like protein P1 (331 aa).

The region spanning 1–331 (QSPINIVSYD…LHALRNVEGY (331 aa)) is the Alpha-carbonic anhydrase domain. The Zn(2+) site is built by H69, H71, and H94. A disordered region spans residues 138–240 (DEPDDEECKR…GENGHKHGCR (103 aa)). Residues 144 to 156 (ECKRILKGHHPDN) are compositionally biased toward basic and acidic residues. Residues 157–232 (NENGNGDNGN…NNGENGNNGE (76 aa)) are compositionally biased toward low complexity. Repeat copies occupy residues 162 to 164 (GDN), 165 to 167 (GNN), 168 to 170 (GYN), 171 to 173 (GDN), 174 to 176 (GNN), 177 to 179 (GDN), 180 to 182 (GNN), 183 to 185 (GYN), 186 to 188 (GDN), 189 to 191 (GNN), 192 to 194 (GDN), 195 to 197 (GNN), 198 to 200 (GYN), 201 to 203 (GDN), 204 to 206 (GNN), 207 to 209 (GDN), 210 to 212 (GNN), 213 to 215 (GEN), 216 to 218 (GNN), 219 to 221 (GEN), 222 to 224 (GNN), 225 to 227 (GEN), 228 to 229 (GN), and 231 to 233 (GEN). Residues 162 to 233 (GDNGNNGYNG…NGENGNNGEN (72 aa)) form a 24 X 3 AA approximate tandem repeats of G-X-N region. 298 to 299 (TT) is a substrate binding site.

Belongs to the alpha-carbonic anhydrase family. In terms of assembly, homooligomer; disulfide-linked. May also be disulfide-linked to insoluble organic matrix. Requires Zn(2+) as cofactor. As to expression, expressed in the mantle.

The protein localises to the secreted. The protein resides in the extracellular space. It localises to the extracellular matrix. The enzyme catalyses hydrogencarbonate + H(+) = CO2 + H2O. Acts as a negative regulator for calcification in the shells of mollusks. May function both as a calcium concentrator and as a carbonic anhydrase required for production of carbonate ions, which are assembled to CaCO(3) at mineralization sites. Is important for shell formation in both the calcitic prismatic layer and the aragonitic nacreous layer. Shows inhibitory activity of crystal formation when present in free state but, when attached to the insoluble matrix, may regulate the form and size of aragonite crystal. This Mizuhopecten yessoensis (Japanese scallop) protein is Nacrein-like protein P1.